The primary structure comprises 188 residues: Protein salivary glands marred (188 aa).

The protein belongs to the TNFAIP8 family. Interacts with the Ste20-like MAP kinase msn.

The protein localises to the cytoplasm. It localises to the cytoskeleton. Functionally, important for modulating JNK signaling, cytoskeletal remodeling and autophagy in larval salivary glands. During salivary gland development, involved in the positive regulation of the JNK signaling pathway, acting downstream of the TNF ligand egr and upstream of bsk. The protein is Protein salivary glands marred of Drosophila melanogaster (Fruit fly).